A 301-amino-acid chain; its full sequence is 2-methoxy-6-polyprenyl-1,4-benzoquinol methylase, mitochondrial (301 aa).

The N-terminal 16 residues, 1-16, are a transit peptide targeting the mitochondrion; it reads MQTTRSTRLLSLARRF. Positions 20–31 are enriched in polar residues; that stretch reads RTASQSAQNSKG. The tract at residues 20 to 44 is disordered; the sequence is RTASQSAQNSKGMASGAESISGKEK. S-adenosyl-L-methionine is bound by residues threonine 111, aspartate 139, and 173–174; that span reads DA.

Belongs to the class I-like SAM-binding methyltransferase superfamily. MenG/UbiE family. In terms of assembly, component of a multi-subunit COQ enzyme complex.

It localises to the mitochondrion inner membrane. It carries out the reaction a 2-methoxy-6-(all-trans-polyprenyl)benzene-1,4-diol + S-adenosyl-L-methionine = a 5-methoxy-2-methyl-3-(all-trans-polyprenyl)benzene-1,4-diol + S-adenosyl-L-homocysteine + H(+). The protein operates within cofactor biosynthesis; ubiquinone biosynthesis. Functionally, methyltransferase required for the conversion of 2-polyprenyl-6-methoxy-1,4-benzoquinol (DDMQH2) to 2-polyprenyl-3-methyl-6-methoxy-1,4-benzoquinol (DMQH2). The chain is 2-methoxy-6-polyprenyl-1,4-benzoquinol methylase, mitochondrial from Drosophila melanogaster (Fruit fly).